The chain runs to 184 residues: dCTP deaminase (184 aa).

DCTP contacts are provided by residues 107-112 (KSTYAR), 131-133 (TLE), Q152, Y166, and Q176. The Proton donor/acceptor role is filled by E133.

This sequence belongs to the dCTP deaminase family. In terms of assembly, homotrimer.

It catalyses the reaction dCTP + H2O + H(+) = dUTP + NH4(+). It functions in the pathway pyrimidine metabolism; dUMP biosynthesis; dUMP from dCTP (dUTP route): step 1/2. Catalyzes the deamination of dCTP to dUTP. This chain is dCTP deaminase, found in Novosphingobium aromaticivorans (strain ATCC 700278 / DSM 12444 / CCUG 56034 / CIP 105152 / NBRC 16084 / F199).